Consider the following 103-residue polypeptide: Histone H4 (103 aa).

Residues 1–14 (MSGRGKGGKGLGKG) are compositionally biased toward gly residues. A disordered region spans residues 1-20 (MSGRGKGGKGLGKGGAKRHR). The residue at position 6 (Lys-6) is an N6-acetyl-N6-methyllysine; alternate. N6-acetyllysine; alternate occurs at positions 6, 9, and 13. Residues Lys-6, Lys-9, and Lys-13 each carry the N6-methyllysine; alternate modification. N6-butyryllysine; alternate occurs at positions 9 and 13. N6-acetyl-N6-methyllysine; alternate is present on Lys-13. The residue at position 17 (Lys-17) is an N6-acetyllysine. Residues 17–21 (KRHRK) mediate DNA binding. Position 32 is an N6-succinyllysine (Lys-32). Omega-N-methylarginine is present on Arg-56. Phosphoserine occurs at positions 61 and 65. At Lys-78 the chain carries N6-succinyllysine. Lys-80 is modified (N6-acetyllysine). Lys-92 bears the N6-glutaryllysine mark.

Belongs to the histone H4 family. As to quaternary structure, the nucleosome is a histone octamer containing two molecules each of H2A, H2B, H3 and H4 assembled in one H3-H4 heterotetramer and two H2A-H2B heterodimers. The octamer wraps approximately 147 bp of DNA. Histone H4 is a component of the UAF (upstream activation factor) complex which consists of UAF30, RRN5, RRN9, RRN10, and histones H3 and H4. Post-translationally, glutarylation at Lys-92 (H4K91glu) destabilizes nucleosomes by promoting dissociation of the H2A-H2B dimers from nucleosomes.

It localises to the nucleus. The protein localises to the chromosome. In terms of biological role, core component of nucleosome. Nucleosomes wrap and compact DNA into chromatin, limiting DNA accessibility to the cellular machineries which require DNA as a template. Histones thereby play a central role in transcription regulation, DNA repair, DNA replication and chromosomal stability. DNA accessibility is regulated via a complex set of post-translational modifications of histones, also called histone code, and nucleosome remodeling. Component of the UAF (upstream activation factor) complex which interacts with the upstream element of the RNA polymerase I promoter and forms a stable preinitiation complex. Together with SPT15/TBP UAF seems to stimulate basal transcription to a fully activated level. The polypeptide is Histone H4 (HHF1) (Saccharomyces cerevisiae (strain ATCC 204508 / S288c) (Baker's yeast)).